We begin with the raw amino-acid sequence, 403 residues long: Metacaspase-7 (403 aa).

Residues H86 and C139 contribute to the active site. Residue C139 is modified to S-nitrosocysteine.

It belongs to the peptidase C14B family. Post-translationally, proteolytically processed; by an autocatalytic mechanism. Expressed in roots, flowers and siliques.

This Arabidopsis thaliana (Mouse-ear cress) protein is Metacaspase-7 (AMC7).